Here is a 342-residue protein sequence, read N- to C-terminus: Glutamyl endopeptidase (342 aa).

Positions 1–29 are cleaved as a signal peptide; the sequence is MKGKFLKVSSLFVATLTTATLVSSPAANA. Positions 30–68 are excised as a propeptide; sequence LSSKAMDNHPQQTQSSKQQTPKIKKGGNLKPLEQREHAN. The disordered stretch occupies residues 33-63; the sequence is KAMDNHPQQTQSSKQQTPKIKKGGNLKPLEQ. The segment covering 39-50 has biased composition (low complexity); sequence PQQTQSSKQQTP. Catalysis depends on charge relay system residues H119, D161, and S237. The tract at residues 283 to 342 is disordered; that stretch reads FANDDQPNNPDNPDNPNNPDNPNNPDNPNNPDEPNNPDNPNNPDNPDNGDNNNSDNPDAA. Residues 286 to 342 are compositionally biased toward low complexity; sequence DDQPNNPDNPDNPNNPDNPNNPDNPNNPDEPNNPDNPNNPDNPDNGDNNNSDNPDAA. Tandem repeats lie at residues 289-291, 292-294, 295-297, 298-300, 301-303, 304-306, 307-309, 310-312, 316-318, 319-321, 322-324, 325-327, and 328-330. Positions 289-330 are 13 X 3 AA repeats of P-[DN]-N; sequence PNNPDNPDNPNNPDNPNNPDNPNNPDEPNNPDNPNNPDNPDN.

This sequence belongs to the peptidase S1B family. Post-translationally, proteolytically cleaved by aureolysin (aur). This cleavage leads to the activation of SspA.

It localises to the secreted. The catalysed reaction is Preferential cleavage: Glu-|-Xaa, Asp-|-Xaa.. Functionally, preferentially cleaves peptide bonds on the carboxyl-terminal side of aspartate and glutamate. Along with other extracellular proteases it is involved in colonization and infection of human tissues. Required for proteolytic maturation of thiol protease SspB and inactivation of SspC, an inhibitor of SspB. It is the most important protease for degradation of fibronectin-binding protein (FnBP) and surface protein A, which are involved in adherence to host cells. May also protect bacteria against host defense mechanism by cleaving the immunoglobulin classes IgG, IgA and IgM. May be involved in the stability of secreted lipases. The protein is Glutamyl endopeptidase (sspA) of Staphylococcus aureus (strain Mu50 / ATCC 700699).